The primary structure comprises 165 residues: Ribosome maturation factor RimM (165 aa).

Residues 94 to 165 (EDEFYIADLN…YGILNYKREV (72 aa)) enclose the PRC barrel domain.

The protein belongs to the RimM family. As to quaternary structure, binds ribosomal protein uS19.

The protein localises to the cytoplasm. Its function is as follows. An accessory protein needed during the final step in the assembly of 30S ribosomal subunit, possibly for assembly of the head region. Essential for efficient processing of 16S rRNA. May be needed both before and after RbfA during the maturation of 16S rRNA. It has affinity for free ribosomal 30S subunits but not for 70S ribosomes. This Rickettsia canadensis (strain McKiel) protein is Ribosome maturation factor RimM.